Consider the following 133-residue polypeptide: MAEKPAAKPKAAAAKAEAKDQSDSYAIVEASGQQFWLQPNRYYDLDRLQAAVDDTVTLENVLLIKDGKNDTTVGQPYVKGASVELKVMDHRRGPKIIVYKMRPKKKTRRKNGHRQELTRVMVQSISIDGKALS.

The disordered stretch occupies residues Met-1–Ser-22.

This sequence belongs to the bacterial ribosomal protein bL21 family. Part of the 50S ribosomal subunit. Contacts protein L20.

This protein binds to 23S rRNA in the presence of protein L20. This is Large ribosomal subunit protein bL21 from Prochlorococcus marinus (strain MIT 9303).